The chain runs to 312 residues: Putative olfactory receptor 1F2 (312 aa).

Residues 1–25 (MERDKPVSVSEFLLLGLSRQPQQQH) are Extracellular-facing. A helical membrane pass occupies residues 26 to 49 (LLFVFFLSMYLATVLGNLLIILAI). The Cytoplasmic portion of the chain corresponds to 50–57 (SIDSRLHT). Residues 58-78 (PMYFFLSNMSFVDNCFSTTVP) form a helical membrane-spanning segment. At 79–99 (KMLANHILRTQTISFSGCLMQ) the chain is on the extracellular side. Cysteine 96 and cysteine 188 are joined by a disulfide. A helical membrane pass occupies residues 100 to 119 (MYFISELADMDNFLLAVMAY). Residues 120-138 (DRFVAVCRPLHYTAKMIHQ) lie on the Cytoplasmic side of the membrane. A helical transmembrane segment spans residues 139 to 157 (LCALLVTGSWVVANSNALL). Residues 158-195 (HTLLMARLSFCADNTIPHIFCDVTPLLKLSCSDTHLSE) lie on the Extracellular side of the membrane. A helical membrane pass occupies residues 196–218 (VMILTEAALVTITPFLCLLASYM). Over 219 to 235 (HITCVVLRVPSTKGRWK) the chain is Cytoplasmic. The helical transmembrane segment at 236–258 (AFSTCGSHLAVVLLFYGTIMSPY) threads the bilayer. The Extracellular portion of the chain corresponds to 259-271 (FRTSSSHSAQRDI). Residues 272 to 291 (AAAVRFTVVTPVMNPLIYSL) form a helical membrane-spanning segment. Topologically, residues 292-312 (RNKDIKGALVKVVAVKFFSVQ) are cytoplasmic.

It belongs to the G-protein coupled receptor 1 family.

It is found in the cell membrane. Odorant receptor. In Homo sapiens (Human), this protein is Putative olfactory receptor 1F2 (OR1F2P).